The primary structure comprises 901 residues: HTH-type transcriptional regulator MalT (901 aa).

39 to 46 (SPAGYGKT) contributes to the ATP binding site. The 66-residue stretch at 829–894 (ELIRTSPLTQ…DAVQHAQQLL (66 aa)) folds into the HTH luxR-type domain. A DNA-binding region (H-T-H motif) is located at residues 853–872 (NEQIAGELAVAATTIKTHIR).

This sequence belongs to the MalT family. As to quaternary structure, monomer in solution. Oligomerizes to an active state in the presence of the positive effectors ATP and maltotriose.

With respect to regulation, activated by ATP and maltotriose, which are both required for DNA binding. Positively regulates the transcription of the maltose regulon whose gene products are responsible for uptake and catabolism of malto-oligosaccharides. Specifically binds to the promoter region of its target genes, recognizing a short DNA motif called the MalT box. The chain is HTH-type transcriptional regulator MalT from Salmonella typhi.